Consider the following 458-residue polypeptide: Riboflavin transporter 2 (458 aa).

The next 5 membrane-spanning stretches (helical) occupy residues 11–31, 38–58, 73–93, 97–117, and 146–166; these read LFGM…PLIV, WYLP…PLFV, PVIY…AFFW, VPLA…LLSV, and GVSG…VVHC. Residues Asn-168, Asn-176, Asn-182, and Asn-199 are each glycosylated (N-linked (GlcNAc...) asparagine). Residues 204–224 form a helical membrane-spanning segment; that stretch reads VFFLFLSAMMVVCLAAFLLLN. Residues 249–274 form a disordered region; that stretch reads DQALSLSHRPQEEKPMISSPDSHRRA. 5 consecutive transmembrane segments (helical) span residues 279–299, 325–345, 349–369, 388–408, and 417–437; these read FGTG…LAWV, LAAT…MFLP, LVLI…IMAM, IVIA…IIGV, and ALVW…LSMF.

The protein belongs to the riboflavin transporter family.

It localises to the cell membrane. The catalysed reaction is riboflavin(in) = riboflavin(out). Plasma membrane transporter mediating the uptake by cells of the water soluble vitamin B2/riboflavin that plays a key role in biochemical oxidation-reduction reactions of the carbohydrate, lipid, and amino acid metabolism. The protein is Riboflavin transporter 2 (rft2) of Salmo salar (Atlantic salmon).